Reading from the N-terminus, the 301-residue chain is Retinochrome (301 aa).

The Extracellular portion of the chain corresponds to 1 to 17 (MFGNPAMTGLHQFTMWE). Residues 18 to 43 (HYFTGSIYLVLGCVVFSLCGMCIIFL) form a helical membrane-spanning segment. Topologically, residues 44 to 54 (ARQSPKPRRKY) are cytoplasmic. Residues 55 to 76 (AILIHVLITAMAVNGGDPAHAS) form a helical membrane-spanning segment. Residues 77-94 (SSIVGRWLYGSVGCQLMG) lie on the Extracellular side of the membrane. Residues 95 to 120 (FWGFFGGMSHIWMLFAFAMERYMAVC) form a helical membrane-spanning segment. The Cytoplasmic portion of the chain corresponds to 121 to 132 (HREFYQQMPSVY). Residues 133–153 (YSIIVGLMYTFGTFWATMPLL) traverse the membrane as a helical segment. At 154–180 (GWASYGLEVHGTSCTINYSVSDESYQS) the chain is on the extracellular side. Asn170 carries an N-linked (GlcNAc...) asparagine glycan. Residues 181–208 (YVFFLAIFSFIFPMVSGWYAISKAWSGL) form a helical membrane-spanning segment. The Cytoplasmic portion of the chain corresponds to 209–230 (SAIPDAEKEKDKDILSEEQLTA). Residues 231-255 (LAGAFILISLISWSGFGYVAIYSAL) form a helical membrane-spanning segment. At 256–264 (THGGAQLSH) the chain is on the extracellular side. Residues 265–289 (LRGHVPPIMSKTGCALFPLLIFLLT) form a helical membrane-spanning segment. Lys275 carries the post-translational modification N6-(retinylidene)lysine. The Cytoplasmic portion of the chain corresponds to 290-301 (ARSLPKSDTKKP).

The protein belongs to the G-protein coupled receptor 1 family. Opsin subfamily. In terms of tissue distribution, mainly stored in myeloid bodies of the inner segments.

The protein localises to the membrane. In terms of biological role, retinochrome is capable of acting as an effective catalyst in the light to convert various isomers of retinal into 11-cis, the form that is required by opsin to resynthesize rhodopsin. This chain is Retinochrome, found in Todarodes pacificus (Japanese flying squid).